The primary structure comprises 170 residues: CASP-like protein 2D1 (170 aa).

The Cytoplasmic segment spans residues Met-1–Leu-4. The helical transmembrane segment at Leu-5–Val-25 threads the bilayer. The Extracellular portion of the chain corresponds to Thr-26–Tyr-47. The chain crosses the membrane as a helical span at residues Met-48–Ile-68. Topologically, residues Arg-69 to Gln-83 are cytoplasmic. Residues Ile-84 to Tyr-104 traverse the membrane as a helical segment. Residues Asn-105–Lys-127 lie on the Extracellular side of the membrane. The chain crosses the membrane as a helical span at residues Leu-128–Ala-148. Over Tyr-149–Ala-170 the chain is Cytoplasmic.

It belongs to the Casparian strip membrane proteins (CASP) family. As to quaternary structure, homodimer and heterodimers.

It is found in the cell membrane. This Populus trichocarpa (Western balsam poplar) protein is CASP-like protein 2D1.